Consider the following 243-residue polypeptide: Triosephosphate isomerase (243 aa).

9 to 11 (NWK) contributes to the substrate binding site. His96 (electrophile) is an active-site residue. Catalysis depends on Glu165, which acts as the Proton acceptor. Substrate is bound by residues Gly171, Ser204, and 225-226 (GG).

This sequence belongs to the triosephosphate isomerase family. Homodimer.

The protein localises to the cytoplasm. The catalysed reaction is D-glyceraldehyde 3-phosphate = dihydroxyacetone phosphate. The protein operates within carbohydrate biosynthesis; gluconeogenesis. It participates in carbohydrate degradation; glycolysis; D-glyceraldehyde 3-phosphate from glycerone phosphate: step 1/1. Functionally, involved in the gluconeogenesis. Catalyzes stereospecifically the conversion of dihydroxyacetone phosphate (DHAP) to D-glyceraldehyde-3-phosphate (G3P). This chain is Triosephosphate isomerase, found in Prochlorococcus marinus (strain MIT 9211).